The chain runs to 265 residues: Hydroxyethylthiazole kinase (265 aa).

Methionine 50 provides a ligand contact to substrate. ATP is bound by residues arginine 125 and threonine 171. Glycine 198 is a binding site for substrate.

The protein belongs to the Thz kinase family. Mg(2+) serves as cofactor.

It catalyses the reaction 5-(2-hydroxyethyl)-4-methylthiazole + ATP = 4-methyl-5-(2-phosphooxyethyl)-thiazole + ADP + H(+). The protein operates within cofactor biosynthesis; thiamine diphosphate biosynthesis; 4-methyl-5-(2-phosphoethyl)-thiazole from 5-(2-hydroxyethyl)-4-methylthiazole: step 1/1. Functionally, catalyzes the phosphorylation of the hydroxyl group of 4-methyl-5-beta-hydroxyethylthiazole (THZ). The sequence is that of Hydroxyethylthiazole kinase from Salmonella arizonae (strain ATCC BAA-731 / CDC346-86 / RSK2980).